The chain runs to 121 residues: Phospholipase A2 homolog ECO_00035 (121 aa).

7 disulfide bridges follow: Cys25-Cys114, Cys27-Cys43, Cys42-Cys94, Cys48-Cys121, Cys49-Cys87, Cys56-Cys80, and Cys74-Cys85. The segment at 104–116 (KKYKIYPNILCRG) is important for membrane-damaging activities in eukaryotes and bacteria; heparin-binding.

It belongs to the phospholipase A2 family. Group II subfamily. S49 sub-subfamily. As to quaternary structure, monomer. In terms of tissue distribution, expressed by the venom gland.

The protein resides in the secreted. In terms of biological role, snake venom phospholipase A2 homolog that lacks enzymatic activity. Shows high myotoxin activities and displays edema-inducing activities. Has cytotoxic activities against HUVEC cells (LC(50)=4.9 uL) and human lung adenocarcinoma A549 cells (LC(50)=3.5 uL). The protein is Phospholipase A2 homolog ECO_00035 of Echis coloratus (Carpet viper).